Consider the following 508-residue polypeptide: Photosystem II CP47 reaction center protein (508 aa).

6 helical membrane-spanning segments follow: residues S21–S36, I101–W115, G140–F156, I203–S218, V237–V252, and T457–R472.

The protein belongs to the PsbB/PsbC family. PsbB subfamily. PSII is composed of 1 copy each of membrane proteins PsbA, PsbB, PsbC, PsbD, PsbE, PsbF, PsbH, PsbI, PsbJ, PsbK, PsbL, PsbM, PsbT, PsbX, PsbY, PsbZ, Psb30/Ycf12, at least 3 peripheral proteins of the oxygen-evolving complex and a large number of cofactors. It forms dimeric complexes. Requires Binds multiple chlorophylls. PSII binds additional chlorophylls, carotenoids and specific lipids. as cofactor.

Its subcellular location is the plastid. The protein resides in the chloroplast thylakoid membrane. Its function is as follows. One of the components of the core complex of photosystem II (PSII). It binds chlorophyll and helps catalyze the primary light-induced photochemical processes of PSII. PSII is a light-driven water:plastoquinone oxidoreductase, using light energy to abstract electrons from H(2)O, generating O(2) and a proton gradient subsequently used for ATP formation. This is Photosystem II CP47 reaction center protein from Pinus koraiensis (Korean pine).